The chain runs to 370 residues: GMP synthase [glutamine-hydrolyzing] subunit B (370 aa).

The GMPS ATP-PPase domain maps to 3–189 (FDPQKFVDEI…LGLPRDIYNR (187 aa)). 29–35 (SGGVDST) serves as a coordination point for ATP.

In terms of assembly, heterodimer composed of a glutamine amidotransferase subunit (A) and a GMP-binding subunit (B).

The enzyme catalyses XMP + L-glutamine + ATP + H2O = GMP + L-glutamate + AMP + diphosphate + 2 H(+). Its pathway is purine metabolism; GMP biosynthesis; GMP from XMP (L-Gln route): step 1/1. Its function is as follows. Catalyzes the synthesis of GMP from XMP. This chain is GMP synthase [glutamine-hydrolyzing] subunit B (guaAB), found in Sulfurisphaera tokodaii (strain DSM 16993 / JCM 10545 / NBRC 100140 / 7) (Sulfolobus tokodaii).